The primary structure comprises 112 residues: Large ribosomal subunit protein eL30x (112 aa).

It belongs to the eukaryotic ribosomal protein eL30 family.

This is Large ribosomal subunit protein eL30x (RPL30C) from Arabidopsis thaliana (Mouse-ear cress).